Consider the following 165-residue polypeptide: Transcription elongation factor A protein-like 1 (165 aa).

2 disordered regions span residues 1 to 66 (MENS…LLPE) and 89 to 124 (IPMEQPPCGIGKHKLEEGSFKERLARSRPQFRGDIH). Positions 33-60 (CSEDDQSSEDLSSEEQSSDEEFFPEELL) are enriched in acidic residues. Basic and acidic residues predominate over residues 101–124 (HKLEEGSFKERLARSRPQFRGDIH).

Belongs to the TFS-II family. TFA subfamily.

Its subcellular location is the nucleus. Functionally, may be involved in transcriptional regulation. Modulates various viral and cellular promoters in a promoter context-dependent manner. Does not bind DNA directly. This is Transcription elongation factor A protein-like 1 from Rattus norvegicus (Rat).